A 456-amino-acid chain; its full sequence is Protein trichome birefringence-like 25 (456 aa).

A helical; Signal-anchor for type II membrane protein transmembrane segment spans residues 26 to 42; sequence QIFLKSVAFFLLIGLAY. Residues 172-174 carry the GDS motif motif; that stretch reads GDS. Residues 426-440 carry the DCXHWCLPGXXDXWN motif motif; sequence DCLHWCLPGPIDSWN.

This sequence belongs to the PC-esterase family. TBL subfamily.

The protein resides in the membrane. Its function is as follows. May be involved in the O-acetylation of mannan. May act as a bridging protein that binds pectin and other cell wall polysaccharides. Probably involved in maintaining esterification of pectins. In Arabidopsis thaliana (Mouse-ear cress), this protein is Protein trichome birefringence-like 25 (TBL25).